The following is a 103-amino-acid chain: Histone H4 (103 aa).

Positions Met1–Gly14 are enriched in gly residues. Positions Met1 to Arg20 are disordered. An N6-acetyl-N6-methyllysine; alternate modification is found at Lys6. 3 positions are modified to N6-methyllysine; alternate: Lys6, Lys9, and Lys13. An N6-acetyl-N6-methyllysine; alternate modification is found at Lys13. A DNA-binding region spans residues Lys17–Lys21. N6-glutaryllysine is present on Lys92.

The protein belongs to the histone H4 family. In terms of assembly, the nucleosome is a histone octamer containing two molecules each of H2A, H2B, H3 and H4 assembled in one H3-H4 heterotetramer and two H2A-H2B heterodimers. The octamer wraps approximately 147 bp of DNA. In terms of processing, glutarylation at Lys-92 (H4K91glu) destabilizes nucleosomes by promoting dissociation of the H2A-H2B dimers from nucleosomes.

The protein localises to the nucleus. It is found in the chromosome. In terms of biological role, core component of nucleosome. Nucleosomes wrap and compact DNA into chromatin, limiting DNA accessibility to the cellular machineries which require DNA as a template. Histones thereby play a central role in transcription regulation, DNA repair, DNA replication and chromosomal stability. DNA accessibility is regulated via a complex set of post-translational modifications of histones, also called histone code, and nucleosome remodeling. This is Histone H4 (HHF1) from Candida glabrata (strain ATCC 2001 / BCRC 20586 / JCM 3761 / NBRC 0622 / NRRL Y-65 / CBS 138) (Yeast).